A 466-amino-acid chain; its full sequence is MDKKQVTDLRSELLDSRFGAKSISTIAESKRFPLHEMRDDVAFQIINDELYLDGNARQNLATFCQTWDDDNVHKLMDLSINKNWIDKEEYPQSAAIDLRCVNMVADLWHAPAPKNGQAVGTNTIGSSEACMLGGMAMKWRWRKRMEAAGKPTNKPNLVCGPVQICWHKFARYWDVELREIPMRPGQLFMDPKRMIEACDENTIGVVPTFGVTYTGNYEFPQPLHDALDKFQADTGIDIDMHIDAASGGFLAPFVAPDIVWDFRLPRVKSISASGHKFGLAPLGCGWVIWRDEEALPQELVFNVDYLGGQIGTFAINFSRPAGQVIAQYYEFLRLGREGYTKVQNASYQVAAYLADEIAKLGPYEFICTGRPDEGIPAVCFKLKDGEDPGYTLYDLSERLRLRGWQVPAFTLGGEATDIVVMRIMCRRGFEMDFAELLLEDYKASLKYLSDHPKLQGIAQQNSFKHT.

Threonine 62 and asparagine 83 together coordinate substrate. Pyridoxal 5'-phosphate contacts are provided by residues 126–127 (SS), threonine 212, and histidine 275. Lysine 276 bears the N6-(pyridoxal phosphate)lysine mark. Residues lysine 446, lysine 453, and lysine 464 each carry the N6-acetyllysine modification.

It belongs to the group II decarboxylase family. In terms of assembly, homohexamer composed of three dimers. Pyridoxal 5'-phosphate is required as a cofactor.

It catalyses the reaction L-glutamate + H(+) = 4-aminobutanoate + CO2. In terms of biological role, converts glutamate to gamma-aminobutyrate (GABA), consuming one intracellular proton in the reaction. The gad system helps to maintain a near-neutral intracellular pH when cells are exposed to extremely acidic conditions. The ability to survive transit through the acidic conditions of the stomach is essential for successful colonization of the mammalian host by commensal and pathogenic bacteria. The protein is Glutamate decarboxylase beta (gadB) of Escherichia coli O6:H1 (strain CFT073 / ATCC 700928 / UPEC).